A 122-amino-acid chain; its full sequence is Large ribosomal subunit protein bL12 (122 aa).

This sequence belongs to the bacterial ribosomal protein bL12 family. In terms of assembly, homodimer. Part of the ribosomal stalk of the 50S ribosomal subunit. Forms a multimeric L10(L12)X complex, where L10 forms an elongated spine to which 2 to 4 L12 dimers bind in a sequential fashion. Binds GTP-bound translation factors.

Its function is as follows. Forms part of the ribosomal stalk which helps the ribosome interact with GTP-bound translation factors. Is thus essential for accurate translation. The chain is Large ribosomal subunit protein bL12 from Clostridium botulinum (strain Langeland / NCTC 10281 / Type F).